A 96-amino-acid polypeptide reads, in one-letter code: Co-chaperonin GroES (96 aa).

The protein belongs to the GroES chaperonin family. In terms of assembly, heptamer of 7 subunits arranged in a ring. Interacts with the chaperonin GroEL.

It is found in the cytoplasm. Its function is as follows. Together with the chaperonin GroEL, plays an essential role in assisting protein folding. The GroEL-GroES system forms a nano-cage that allows encapsulation of the non-native substrate proteins and provides a physical environment optimized to promote and accelerate protein folding. GroES binds to the apical surface of the GroEL ring, thereby capping the opening of the GroEL channel. The chain is Co-chaperonin GroES from Hahella chejuensis (strain KCTC 2396).